The chain runs to 131 residues: Global transcriptional regulator Spx (131 aa).

Residues Cys-10 and Cys-13 are joined by a disulfide bond.

Belongs to the ArsC family. Spx subfamily. As to quaternary structure, interacts with the C-terminal domain of the alpha subunit of the RNAP.

It localises to the cytoplasm. With respect to regulation, under non-stress conditions, Spx is degraded by ClpXP. Efficient degradation by ClpXP requires the adapter protein SpxH/YjbH. Function, levels and solubility of Spx are affected by SpxH/YjbH aggregation and stress conditions. In terms of biological role, global transcriptional regulator that plays a key role in stress response and exerts either positive or negative regulation of genes. Acts by interacting with the C-terminal domain of the alpha subunit of the RNA polymerase (RNAP). This interaction can enhance binding of RNAP to the promoter region of target genes and stimulate their transcription, or block interaction of RNAP with activator proteins and repress transcription. Functionally, required for transcription of thioredoxin reductase (trxB). Modulates the expression of icaR, encoding a repressor of the biofilm operon icaADBC. Also controls the transcription of trfA, a gene implicated in cell wall antibiotic resistance, which in turn is required for degradation of MazE antitoxin, the unstable component of the MazEF toxin-antitoxin system, that neutralizes the endoribonuclease activity of MazF toxin. This Staphylococcus aureus (strain NCTC 8325 / PS 47) protein is Global transcriptional regulator Spx.